The primary structure comprises 1204 residues: ATP-dependent helicase/nuclease subunit A (1204 aa).

The UvrD-like helicase ATP-binding domain occupies 2–469; it reads TKFTKEQNQA…IVLSDNFRST (468 aa). 23-30 lines the ATP pocket; sequence ASAGSGKT. The region spanning 496–784 is the UvrD-like helicase C-terminal domain; sequence EGQLQFGATY…KLMTIHASKG (289 aa).

Belongs to the helicase family. AddA subfamily. Heterodimer of AddA and AddB/RexB. Requires Mg(2+) as cofactor.

It carries out the reaction Couples ATP hydrolysis with the unwinding of duplex DNA by translocating in the 3'-5' direction.. The catalysed reaction is ATP + H2O = ADP + phosphate + H(+). The heterodimer acts as both an ATP-dependent DNA helicase and an ATP-dependent, dual-direction single-stranded exonuclease. Recognizes the chi site generating a DNA molecule suitable for the initiation of homologous recombination. The AddA nuclease domain is required for chi fragment generation; this subunit has the helicase and 3' -&gt; 5' nuclease activities. The protein is ATP-dependent helicase/nuclease subunit A of Lactobacillus johnsonii (strain CNCM I-12250 / La1 / NCC 533).